A 27-amino-acid polypeptide reads, in one-letter code: MKRISTTITTTITTTITITITTGNGAG.

This sequence belongs to the thr operon leader peptide family.

This protein is involved in control of the biosynthesis of threonine. This Escherichia coli O157:H7 protein is thr operon leader peptide.